The following is a 60-amino-acid chain: UPF0434 protein Vapar_2640 (60 aa).

Belongs to the UPF0434 family.

In Variovorax paradoxus (strain S110), this protein is UPF0434 protein Vapar_2640.